The primary structure comprises 293 residues: Germ cell-specific gene 1-like protein 2 (293 aa).

Topologically, residues 1 to 8 (MDRAKQQQ) are cytoplasmic. A helical membrane pass occupies residues 9–29 (ALLLLPVCLALTFSLTAVVSS). Topologically, residues 30–120 (HWCEGTRRVV…RSVVPAEEQG (91 aa)) are extracellular. N-linked (GlcNAc...) asparagine glycans are attached at residues Asn-59 and Asn-67. Residues 121 to 141 (VLWLSIGGEVLDIVLILTSAI) form a helical membrane-spanning segment. Residues 142–160 (LLGSRVSCRSPGFHWLRVD) are Cytoplasmic-facing. A helical membrane pass occupies residues 161 to 181 (ALVAIFMVLAGLLGMVAHMMY). Residues 182–204 (TTIFQITVNLGPEDWKPQTWDYG) are Extracellular-facing. A helical transmembrane segment spans residues 205-225 (WSYCLAWGSFALCLAVSVSAM). Residues 226-293 (SRFTAARLEF…PGAPGKVSIC (68 aa)) lie on the Cytoplasmic side of the membrane.

It belongs to the GSG1 family.

It localises to the membrane. This Homo sapiens (Human) protein is Germ cell-specific gene 1-like protein 2.